The following is a 176-amino-acid chain: Adenylyl-sulfate kinase (176 aa).

Gly12–Ser19 is an ATP binding site. Residue Ser86 is the Phosphoserine intermediate of the active site.

It belongs to the APS kinase family.

It catalyses the reaction adenosine 5'-phosphosulfate + ATP = 3'-phosphoadenylyl sulfate + ADP + H(+). It participates in sulfur metabolism; hydrogen sulfide biosynthesis; sulfite from sulfate: step 2/3. In terms of biological role, catalyzes the synthesis of activated sulfate. The protein is Adenylyl-sulfate kinase of Gloeothece citriformis (strain PCC 7424) (Cyanothece sp. (strain PCC 7424)).